Here is a 199-residue protein sequence, read N- to C-terminus: dITP/XTP pyrophosphatase (199 aa).

8–13 (TRNKGK) is a substrate binding site. 2 residues coordinate Mg(2+): E41 and D70. The Proton acceptor role is filled by D70. Residues S71, 153–156 (FGYD), K176, and 181–182 (HR) contribute to the substrate site.

Belongs to the HAM1 NTPase family. As to quaternary structure, homodimer. The cofactor is Mg(2+).

It catalyses the reaction XTP + H2O = XMP + diphosphate + H(+). The catalysed reaction is dITP + H2O = dIMP + diphosphate + H(+). It carries out the reaction ITP + H2O = IMP + diphosphate + H(+). Functionally, pyrophosphatase that catalyzes the hydrolysis of nucleoside triphosphates to their monophosphate derivatives, with a high preference for the non-canonical purine nucleotides XTP (xanthosine triphosphate), dITP (deoxyinosine triphosphate) and ITP. Seems to function as a house-cleaning enzyme that removes non-canonical purine nucleotides from the nucleotide pool, thus preventing their incorporation into DNA/RNA and avoiding chromosomal lesions. This Geobacter sulfurreducens (strain ATCC 51573 / DSM 12127 / PCA) protein is dITP/XTP pyrophosphatase.